Reading from the N-terminus, the 567-residue chain is Geranylgeranyl transferase type-2 subunit alpha (567 aa).

PFTA repeat units follow at residues 44 to 78, 88 to 122, 124 to 158, 159 to 193, 207 to 241, and 363 to 397; these read LDES…HLET, LVKA…RLPE, NWAR…QAAV, APAE…QLHP, VLLK…RAEP, and VLQS…ALDP. Ser-98 bears the Phosphoserine mark. 5 LRR repeats span residues 442–463, 464–486, 487–508, 509–530, and 534–555; these read DVRV…EQLL, LVTH…AALR, CLEV…ANLP, RLQE…QPLV, and RLVL…QERL.

The protein belongs to the protein prenyltransferase subunit alpha family. As to quaternary structure, heterotrimer composed of RABGGTA, RABGGTB and CHM; within this trimer, RABGGTA and RABGGTB form the catalytic component B, while CHM (component A) mediates peptide substrate binding. The Rab GGTase dimer (RGGT) interacts with CHM (component A) prior to Rab protein binding; the association is stabilized by geranylgeranyl pyrophosphate (GGpp). The CHM:RGGT:Rab complex is destabilized by GGpp. Interacts with non-phosphorylated form of RAB8A; phosphorylation of RAB8A at 'Thr-72' disrupts this interaction. Most abundant in the heart, brain, spleen and liver. Less in the lung, muscle, kidney and testis; in these tissues less abundant than the beta subunit.

It carries out the reaction geranylgeranyl diphosphate + L-cysteinyl-[protein] = S-geranylgeranyl-L-cysteinyl-[protein] + diphosphate. The enzymatic reaction requires the aid of a Rab escort protein (also called component A), such as CHM. In terms of biological role, catalyzes the transfer of a geranylgeranyl moiety from geranylgeranyl diphosphate to both cysteines of Rab proteins with the C-terminal sequence -XXCC, -XCXC and -CCXX, such as RAB1A, RAB3A, RAB5A and RAB7A. The chain is Geranylgeranyl transferase type-2 subunit alpha (Rabggta) from Rattus norvegicus (Rat).